A 340-amino-acid chain; its full sequence is MALPIYYDKDCDINLIKSKKVAIIGFGSQGHAHAENLRDSGVEVKIGLYPGGRSWKKAEAKGFDVLEVADASEWADVVMILIPDEIQSEVYYRDIEPNLKESDTIAFGHGFNIHYGRIKPRADINVMMVAPKAPGHTVRSEFVKGGGIPDLIAVAQDPSGNTLELAKSYASAIGGGRTGIIHTTFKDETETDLFGEQAVLCGGVSALIQAGFETLTEAGYPEEMAYFECLHELKLIVDLIYEGGLANMRYSISNTAEYGDYVSGPRVINEASRQAMKDILKEIQNGKFAKDFILEGMAGYPRMTAERRNCEAHPIEQVGKRLRAMMPWITANKIVDQEKN.

The 181-residue stretch at 3–183 (LPIYYDKDCD…GGGRTGIIHT (181 aa)) folds into the KARI N-terminal Rossmann domain. NADP(+) is bound by residues 26 to 29 (FGSQ), S54, and 84 to 87 (DEIQ). H109 is a catalytic residue. G135 serves as a coordination point for NADP(+). Positions 184 to 329 (TFKDETETDL…KRLRAMMPWI (146 aa)) constitute a KARI C-terminal knotted domain. D192, E196, E228, and E232 together coordinate Mg(2+). Substrate is bound at residue S253.

It belongs to the ketol-acid reductoisomerase family. Mg(2+) serves as cofactor.

It carries out the reaction (2R)-2,3-dihydroxy-3-methylbutanoate + NADP(+) = (2S)-2-acetolactate + NADPH + H(+). The catalysed reaction is (2R,3R)-2,3-dihydroxy-3-methylpentanoate + NADP(+) = (S)-2-ethyl-2-hydroxy-3-oxobutanoate + NADPH + H(+). Its pathway is amino-acid biosynthesis; L-isoleucine biosynthesis; L-isoleucine from 2-oxobutanoate: step 2/4. It participates in amino-acid biosynthesis; L-valine biosynthesis; L-valine from pyruvate: step 2/4. Functionally, involved in the biosynthesis of branched-chain amino acids (BCAA). Catalyzes an alkyl-migration followed by a ketol-acid reduction of (S)-2-acetolactate (S2AL) to yield (R)-2,3-dihydroxy-isovalerate. In the isomerase reaction, S2AL is rearranged via a Mg-dependent methyl migration to produce 3-hydroxy-3-methyl-2-ketobutyrate (HMKB). In the reductase reaction, this 2-ketoacid undergoes a metal-dependent reduction by NADPH to yield (R)-2,3-dihydroxy-isovalerate. This Nitratiruptor sp. (strain SB155-2) protein is Ketol-acid reductoisomerase (NADP(+)).